The following is a 465-amino-acid chain: QFKISADRYIKEKSSIAVIGLSVHTAPVDMREKLAVAEELWPRAISELTSLNHIEEAAVLSTCNRMEIYVVALSWNRGIREVVDWMSKKSGIPASELREHLFMLRDSGATRHLFEVSAGLDSLVLGEGQILAQVKQVVRNGQNSGGLGKNIDRMFKDAITAGKRARCETNISAGAVSVSSAAVELAMMKLPKSECLSARMLLIGAGKMGKLVVKHLIAKGCKKVVVVNRSVERVDAIREEMKDIEIVYRPLTEMYEAAADADVVFTSTASESLLFTKEHAEALPPISLAMGGVRLFVDISVPRNVGACLSQVEHARVYNVDDLKEVVEANKEDRVRKAMEAQAIITQELKRFEAWRDSLETVPTIKKLRSYADRIRASELDKCLQKIGEDNLNKKTRRSIEELSTGIVNKLLHGPLQHLRCDGSDSRTLDETLDNMHALNRMFNLDTEKAVLEQKIKAKVEKTQS.

Residues 62-65, Ser-122, 127-129, and Gln-133 each bind substrate; these read TCNR and EGQ. Cys-63 acts as the Nucleophile in catalysis. NADP(+) is bound at residue 204-209; that stretch reads GAGKMG.

This sequence belongs to the glutamyl-tRNA reductase family.

It is found in the plastid. The protein resides in the chloroplast. The catalysed reaction is (S)-4-amino-5-oxopentanoate + tRNA(Glu) + NADP(+) = L-glutamyl-tRNA(Glu) + NADPH + H(+). The protein operates within porphyrin-containing compound metabolism; protoporphyrin-IX biosynthesis; 5-aminolevulinate from L-glutamyl-tRNA(Glu): step 1/2. Catalyzes the NADPH-dependent reduction of glutamyl-tRNA(Glu) to glutamate 1-semialdehyde (GSA). This Hordeum vulgare (Barley) protein is Glutamyl-tRNA reductase 2 (HEMA2).